Consider the following 143-residue polypeptide: Large ribosomal subunit protein uL11 (143 aa).

It belongs to the universal ribosomal protein uL11 family. In terms of assembly, part of the ribosomal stalk of the 50S ribosomal subunit. Interacts with L10 and the large rRNA to form the base of the stalk. L10 forms an elongated spine to which L12 dimers bind in a sequential fashion forming a multimeric L10(L12)X complex. One or more lysine residues are methylated.

Forms part of the ribosomal stalk which helps the ribosome interact with GTP-bound translation factors. The polypeptide is Large ribosomal subunit protein uL11 (Koribacter versatilis (strain Ellin345)).